A 227-amino-acid polypeptide reads, in one-letter code: Cytochrome c oxidase subunit 2 (227 aa).

Topologically, residues 1 to 14 (MACPVQLGFQDAAS) are mitochondrial intermembrane. Residues 15-45 (PIMEELTYFHDHTLMIVFLISSLVLYIISLM) traverse the membrane as a helical segment. Topologically, residues 46–59 (LTTELTHTSTMDAQ) are mitochondrial matrix. Residues 60–87 (EVETVWTILPAVILILIALPSLRILYMM) traverse the membrane as a helical segment. The Mitochondrial intermembrane portion of the chain corresponds to 88-227 (DEITTPSLTL…HFEEWLLAML (140 aa)). Cu cation-binding residues include His161, Cys196, Glu198, Cys200, His204, and Met207. Residue Glu198 participates in Mg(2+) binding.

The protein belongs to the cytochrome c oxidase subunit 2 family. In terms of assembly, component of the cytochrome c oxidase (complex IV, CIV), a multisubunit enzyme composed of 14 subunits. The complex is composed of a catalytic core of 3 subunits MT-CO1, MT-CO2 and MT-CO3, encoded in the mitochondrial DNA, and 11 supernumerary subunits COX4I, COX5A, COX5B, COX6A, COX6B, COX6C, COX7A, COX7B, COX7C, COX8 and NDUFA4, which are encoded in the nuclear genome. The complex exists as a monomer or a dimer and forms supercomplexes (SCs) in the inner mitochondrial membrane with NADH-ubiquinone oxidoreductase (complex I, CI) and ubiquinol-cytochrome c oxidoreductase (cytochrome b-c1 complex, complex III, CIII), resulting in different assemblies (supercomplex SCI(1)III(2)IV(1) and megacomplex MCI(2)III(2)IV(2)). Found in a complex with TMEM177, COA6, COX18, COX20, SCO1 and SCO2. Interacts with TMEM177 in a COX20-dependent manner. Interacts with COX20. Interacts with COX16. Requires Cu cation as cofactor.

It is found in the mitochondrion inner membrane. It catalyses the reaction 4 Fe(II)-[cytochrome c] + O2 + 8 H(+)(in) = 4 Fe(III)-[cytochrome c] + 2 H2O + 4 H(+)(out). In terms of biological role, component of the cytochrome c oxidase, the last enzyme in the mitochondrial electron transport chain which drives oxidative phosphorylation. The respiratory chain contains 3 multisubunit complexes succinate dehydrogenase (complex II, CII), ubiquinol-cytochrome c oxidoreductase (cytochrome b-c1 complex, complex III, CIII) and cytochrome c oxidase (complex IV, CIV), that cooperate to transfer electrons derived from NADH and succinate to molecular oxygen, creating an electrochemical gradient over the inner membrane that drives transmembrane transport and the ATP synthase. Cytochrome c oxidase is the component of the respiratory chain that catalyzes the reduction of oxygen to water. Electrons originating from reduced cytochrome c in the intermembrane space (IMS) are transferred via the dinuclear copper A center (CU(A)) of subunit 2 and heme A of subunit 1 to the active site in subunit 1, a binuclear center (BNC) formed by heme A3 and copper B (CU(B)). The BNC reduces molecular oxygen to 2 water molecules using 4 electrons from cytochrome c in the IMS and 4 protons from the mitochondrial matrix. This Cheirogaleus medius (Fat-tailed dwarf lemur) protein is Cytochrome c oxidase subunit 2 (MT-CO2).